The sequence spans 484 residues: Glutamyl-tRNA(Gln) amidotransferase subunit A (484 aa).

Residues lysine 77 and serine 152 each act as charge relay system in the active site. Residue serine 176 is the Acyl-ester intermediate of the active site.

It belongs to the amidase family. GatA subfamily. Heterotrimer of A, B and C subunits.

It catalyses the reaction L-glutamyl-tRNA(Gln) + L-glutamine + ATP + H2O = L-glutaminyl-tRNA(Gln) + L-glutamate + ADP + phosphate + H(+). Allows the formation of correctly charged Gln-tRNA(Gln) through the transamidation of misacylated Glu-tRNA(Gln) in organisms which lack glutaminyl-tRNA synthetase. The reaction takes place in the presence of glutamine and ATP through an activated gamma-phospho-Glu-tRNA(Gln). This chain is Glutamyl-tRNA(Gln) amidotransferase subunit A, found in Lacticaseibacillus casei (strain BL23) (Lactobacillus casei).